The sequence spans 288 residues: Bifunctional protein MdtA (288 aa).

NADP(+) is bound by residues 129–132, 152–156, 195–198, and Lys-256; these read TGPV, RKLDK, and TAGA.

As to quaternary structure, homotrimer.

It localises to the cytoplasm. The catalysed reaction is 5,10-methylenetetrahydromethanopterin + NADP(+) = 5,10-methenyl-5,6,7,8-tetrahydromethanopterin + NADPH. The enzyme catalyses (6R)-5,10-methylene-5,6,7,8-tetrahydrofolate + NADP(+) = (6R)-5,10-methenyltetrahydrofolate + NADPH. It participates in one-carbon metabolism; formaldehyde degradation; formate from formaldehyde (H(4)MPT route): step 2/5. Its function is as follows. Catalyzes the dehydrogenation of methylene-H(4)MPT. Can also catalyze the reversible dehydrogenation of methylene-H(4)F with 20-fold lower catalytic efficiency. In Methylorubrum extorquens (strain ATCC 14718 / DSM 1338 / JCM 2805 / NCIMB 9133 / AM1) (Methylobacterium extorquens), this protein is Bifunctional protein MdtA.